Reading from the N-terminus, the 428-residue chain is Serine--tRNA ligase (428 aa).

231–233 is a binding site for L-serine; the sequence is TAE. Residue 262-264 coordinates ATP; it reads RSE. Glutamate 285 is a binding site for L-serine. 349-352 serves as a coordination point for ATP; it reads EISS. Serine 385 serves as a coordination point for L-serine.

Belongs to the class-II aminoacyl-tRNA synthetase family. Type-1 seryl-tRNA synthetase subfamily. Homodimer. The tRNA molecule binds across the dimer.

Its subcellular location is the cytoplasm. The catalysed reaction is tRNA(Ser) + L-serine + ATP = L-seryl-tRNA(Ser) + AMP + diphosphate + H(+). It catalyses the reaction tRNA(Sec) + L-serine + ATP = L-seryl-tRNA(Sec) + AMP + diphosphate + H(+). The protein operates within aminoacyl-tRNA biosynthesis; selenocysteinyl-tRNA(Sec) biosynthesis; L-seryl-tRNA(Sec) from L-serine and tRNA(Sec): step 1/1. Functionally, catalyzes the attachment of serine to tRNA(Ser). Is also able to aminoacylate tRNA(Sec) with serine, to form the misacylated tRNA L-seryl-tRNA(Sec), which will be further converted into selenocysteinyl-tRNA(Sec). In Staphylococcus aureus (strain MW2), this protein is Serine--tRNA ligase.